A 102-amino-acid chain; its full sequence is Antitoxin VapB46 (102 aa).

Belongs to the phD/YefM antitoxin family.

Its function is as follows. Antitoxin component of a type II toxin-antitoxin (TA) system. Neutralizes the effect of cognate toxin VapC46. This Mycobacterium tuberculosis (strain CDC 1551 / Oshkosh) protein is Antitoxin VapB46 (vapB46).